The primary structure comprises 260 residues: LIM and SH3 domain protein 1 (260 aa).

Position 1 is an N-acetylmethionine (M1). The region spanning 5–56 is the LIM zinc-binding domain; the sequence is CARCCKIVYPTEKVNCLDKFWHKACFHCETCKMTLNMKNYKGYEKKPYCNAH. K42 carries the post-translational modification N6-acetyllysine. Nebulin repeat units lie at residues 61–95 and 97–131; these read SFTM…KNKG and GFSV…KSRM. Phosphothreonine is present on T68. K75 is modified (N6-methyllysine). S99 is modified (phosphoserine). T104 is modified (phosphothreonine). Position 112 is an N6-succinyllysine (K112). A phosphoserine mark is found at S118 and S134. The segment at 123–204 is disordered; it reads HEEFEKSRMG…QRSAPGGGGK (82 aa). A compositionally biased stretch (basic and acidic residues) spans 140-155; that stretch reads ECERRDPQESSYRRPQ. A compositionally biased stretch (low complexity) spans 171 to 180; sequence QQPQQQPAAQ. Positions 201-260 constitute an SH3 domain; it reads GGGKRYRAVYDYSAADEDEVSFQDGDTIVNVQQIDDGWMYGTVERTGDTGMLPANYVEAI.

Interacts with F-actin. Interacts with ANKRD54. Interacts with KBTBD10. In terms of processing, phosphorylated.

Its subcellular location is the cytoplasm. It localises to the cell cortex. The protein resides in the cytoskeleton. Functionally, plays an important role in the regulation of dynamic actin-based, cytoskeletal activities. Agonist-dependent changes in LASP1 phosphorylation may also serve to regulate actin-associated ion transport activities, not only in the parietal cell but also in certain other F-actin-rich secretory epithelial cell types. The polypeptide is LIM and SH3 domain protein 1 (LASP1) (Bos taurus (Bovine)).